Here is a 227-residue protein sequence, read N- to C-terminus: uncharacterized protein (227 aa).

A Response regulatory domain is found at 2–115; it reads KILMIEDNVS…TLVARIKAVI (114 aa). Asp51 carries the 4-aspartylphosphate modification. The ompR/PhoB-type DNA-binding region spans 128–226; it reads EDMIETECFT…VWGVGYKFDE (99 aa).

In terms of processing, phosphorylated by YclK.

The protein resides in the cytoplasm. Functionally, could be member of the two-component regulatory system YclK/YclJ. This is an uncharacterized protein from Bacillus subtilis (strain 168).